The chain runs to 1217 residues: DNA-directed RNA polymerase subunit beta' (1217 aa).

4 residues coordinate Zn(2+): C60, C62, C75, and C78. Residues D449, D451, and D453 each coordinate Mg(2+). Zn(2+) contacts are provided by C818, C892, C899, and C902.

Belongs to the RNA polymerase beta' chain family. The RNAP catalytic core consists of 2 alpha, 1 beta, 1 beta' and 1 omega subunit. When a sigma factor is associated with the core the holoenzyme is formed, which can initiate transcription. Mg(2+) is required as a cofactor. It depends on Zn(2+) as a cofactor.

It catalyses the reaction RNA(n) + a ribonucleoside 5'-triphosphate = RNA(n+1) + diphosphate. Functionally, DNA-dependent RNA polymerase catalyzes the transcription of DNA into RNA using the four ribonucleoside triphosphates as substrates. The sequence is that of DNA-directed RNA polymerase subunit beta' from Enterococcus faecalis (strain ATCC 700802 / V583).